The sequence spans 210 residues: Coatomer subunit zeta-2 (210 aa).

A compositionally biased stretch (basic and acidic residues) spans 1-12; it reads MQRPEAWPRPHP. The disordered stretch occupies residues 1–34; sequence MQRPEAWPRPHPGEGAAAAQAGGPAPPARAGEPS. Residues 13–34 are compositionally biased toward low complexity; the sequence is GEGAAAAQAGGPAPPARAGEPS.

It belongs to the adaptor complexes small subunit family. As to quaternary structure, oligomeric complex.

The protein localises to the cytoplasm. Its subcellular location is the endoplasmic reticulum-Golgi intermediate compartment membrane. It localises to the golgi apparatus membrane. The protein resides in the cytoplasmic vesicle. It is found in the COPI-coated vesicle membrane. Its function is as follows. The coatomer is a cytosolic protein complex that binds to dilysine motifs and reversibly associates with Golgi non-clathrin-coated vesicles, which further mediate biosynthetic protein transport from the ER, via the Golgi up to the trans Golgi network. Coatomer complex is required for budding from Golgi membranes, and is essential for the retrograde Golgi-to-ER transport of dilysine-tagged proteins. The zeta subunit may be involved in regulating the coat assembly and, hence, the rate of biosynthetic protein transport due to its association-dissociation properties with the coatomer complex. The sequence is that of Coatomer subunit zeta-2 (COPZ2) from Homo sapiens (Human).